A 634-amino-acid polypeptide reads, in one-letter code: Factor of DNA methylation 5 (634 aa).

Residues 254-469 (IVVDDLANKI…EDTNSALMVK (216 aa)) are a coiled coil.

Its function is as follows. Acts in association with FDM3 and FDM4 for RNA-directed DNA methylation (RdDM). This Arabidopsis thaliana (Mouse-ear cress) protein is Factor of DNA methylation 5.